The sequence spans 255 residues: Uridylate kinase (255 aa).

Residues 1 to 21 (MSAAAAGRGERLNHAGNPGHR) form a disordered region. 30–33 (KLGG) provides a ligand contact to ATP. G71 contributes to the UMP binding site. 2 residues coordinate ATP: G72 and R76. UMP is bound by residues D91 and 152–159 (MGLPYFST). Residues F185 and D188 each coordinate ATP.

It belongs to the UMP kinase family. As to quaternary structure, homohexamer.

Its subcellular location is the cytoplasm. It catalyses the reaction UMP + ATP = UDP + ADP. It functions in the pathway pyrimidine metabolism; CTP biosynthesis via de novo pathway; UDP from UMP (UMPK route): step 1/1. Inhibited by UTP. In terms of biological role, catalyzes the reversible phosphorylation of UMP to UDP. The polypeptide is Uridylate kinase (Mycobacterium leprae (strain TN)).